Reading from the N-terminus, the 733-residue chain is MTEGTCLRRRGGPYKTEPATDLTRWRLQNELGRQRWTYYQAEDDPGREQTGLEAHSLGLDTRSYFTDLPKAQTAHEGALNGVTFYAKLQAEDGHWAGDYGGPLFLLPGLLITCHISHISLPAGYREEMVRYLRSVQLPDGGWGLHIEDKSTVFGTALNYVALRILGIGPDDPDLVRARNVLHKKGGAVAIPSWGKFWLAVLNVYSWEGLNTLFPEMWLFPEWVPAHPSTLWCHCRQVYLPMSYCYATRLSASEDPLVQSLRQELYVQDYASIDWPAQRNNVSPDEMYTPHSWLLHVVYGLLNLYERFHSTSLRKWAVQMLYEHIAADDCFTKCISIGPISKTINMLVRWSVDGPSSPAFQEHVSRIKDYLWLGLDGMKMQGTNGSQIWDTSFAIQALLEAGAHHRPEFLPCLQKAHEFLRLSQVPENCPDYQKYYRHMRKGGFSFSTLDCGWIVADCTAEGLKAVLLLQNQCPSITEHIPRERLCDAVDVLLSLRNADGGFATYEKKRGGYLLELLNPSEVFGDIMIDYTYVECTSAVMQALKHFHEHFPDYRAAEVRETLNQGLDFCRRKQRADGSWEGSWGVCFTYGTWFGLEAFACMGHTYQDGAACAEVAQACNFLLSQQMADGGWGEDFESCEQRRYVQSARSQVHSTCWALMGLMAVRHPDITAQERGIRCLLGKQLPNGDWPQENISGVFNKSCAISYTSYRNIFPIWALGRFSNLYPDNTLAGHI.

Residue threonine 2 is modified to N-acetylthreonine. Residues 125–166 (REEMVRYLRSVQLPDGGWGLHIEDKSTVFGTALNYVALRILG) form a PFTB 1 repeat. Catalysis depends on aspartate 456, which acts as the Proton donor. PFTB repeat units lie at residues 484-529 (LCDA…MIDY), 561-601 (LNQG…ACMG), and 613-654 (VAQA…HSTC).

This sequence belongs to the terpene cyclase/mutase family. In terms of assembly, monomer.

Its subcellular location is the endoplasmic reticulum membrane. The enzyme catalyses (S)-2,3-epoxysqualene = lanosterol. The protein operates within terpene metabolism; lanosterol biosynthesis; lanosterol from farnesyl diphosphate: step 3/3. Key enzyme in the cholesterol biosynthesis pathway. Catalyzes the cyclization of (S)-2,3 oxidosqualene to lanosterol, a reaction that forms the sterol nucleus. Through the production of lanosterol may regulate lens protein aggregation and increase transparency. The chain is Lanosterol synthase from Mus musculus (Mouse).